The sequence spans 952 residues: Translation initiation factor IF-2 (952 aa).

Disordered stretches follow at residues 74–95 (QRRLSRLEEQSRKTYEKERQLK), 153–204 (AAQA…KEEP), 230–256 (MHSPFDRSSEAERKKKNRKKNFKEQAD), and 273–319 (DEKG…DVND). A compositionally biased stretch (low complexity) spans 153–168 (AAQADQTDQTDQTDQA). Basic and acidic residues predominate over residues 232–242 (SPFDRSSEAER). The span at 286–303 (PGETNAATPAGTASTAGA) shows a compositional bias: low complexity. One can recognise a tr-type G domain in the interval 449-619 (IRPPVITIMG…LAEAEIRELK (171 aa)). A G1 region spans residues 458-465 (GHVDHGKT). Residue 458 to 465 (GHVDHGKT) participates in GTP binding. Residues 483 to 487 (GITQH) are G2. The tract at residues 505 to 508 (DTPG) is G3. GTP-binding positions include 505-509 (DTPGH) and 559-562 (NKVD). Residues 559-562 (NKVD) form a G4 region. Residues 595-597 (SAK) form a G5 region.

This sequence belongs to the TRAFAC class translation factor GTPase superfamily. Classic translation factor GTPase family. IF-2 subfamily.

Its subcellular location is the cytoplasm. Its function is as follows. One of the essential components for the initiation of protein synthesis. Protects formylmethionyl-tRNA from spontaneous hydrolysis and promotes its binding to the 30S ribosomal subunits. Also involved in the hydrolysis of GTP during the formation of the 70S ribosomal complex. The polypeptide is Translation initiation factor IF-2 (Chlorobium limicola (strain DSM 245 / NBRC 103803 / 6330)).